An 89-amino-acid chain; its full sequence is Small ribosomal subunit protein uS15 (89 aa).

It belongs to the universal ribosomal protein uS15 family. Part of the 30S ribosomal subunit. Forms a bridge to the 50S subunit in the 70S ribosome, contacting the 23S rRNA.

Its function is as follows. One of the primary rRNA binding proteins, it binds directly to 16S rRNA where it helps nucleate assembly of the platform of the 30S subunit by binding and bridging several RNA helices of the 16S rRNA. Functionally, forms an intersubunit bridge (bridge B4) with the 23S rRNA of the 50S subunit in the ribosome. The polypeptide is Small ribosomal subunit protein uS15 (Hahella chejuensis (strain KCTC 2396)).